Consider the following 354-residue polypeptide: tRNA-specific 2-thiouridylase MnmA (354 aa).

ATP is bound by residues 6-13 (LLSGGVDS) and Leu-33. Cys-100 (nucleophile) is an active-site residue. Cysteines 100 and 195 form a disulfide. Position 123 (Gly-123) interacts with ATP. Residues 145–147 (KDQ) form an interaction with tRNA region. Catalysis depends on Cys-195, which acts as the Cysteine persulfide intermediate.

This sequence belongs to the MnmA/TRMU family.

The protein resides in the cytoplasm. It catalyses the reaction S-sulfanyl-L-cysteinyl-[protein] + uridine(34) in tRNA + AH2 + ATP = 2-thiouridine(34) in tRNA + L-cysteinyl-[protein] + A + AMP + diphosphate + H(+). Functionally, catalyzes the 2-thiolation of uridine at the wobble position (U34) of tRNA, leading to the formation of s(2)U34. This is tRNA-specific 2-thiouridylase MnmA from Borrelia hermsii (strain HS1 / DAH).